The sequence spans 325 residues: tRNA N6-adenosine threonylcarbamoyltransferase (325 aa).

H107, H111, and Y127 together coordinate Fe cation. Residues Y127 to G131, D159, G172, E176, and N257 each bind substrate. D285 lines the Fe cation pocket.

This sequence belongs to the KAE1 / TsaD family. Monomer. Component of the KEOPS complex that consists of Kae1, Bud32, Cgi121 and Pcc1; the whole complex dimerizes. Fe(2+) serves as cofactor.

It localises to the cytoplasm. The catalysed reaction is L-threonylcarbamoyladenylate + adenosine(37) in tRNA = N(6)-L-threonylcarbamoyladenosine(37) in tRNA + AMP + H(+). Functionally, required for the formation of a threonylcarbamoyl group on adenosine at position 37 (t(6)A37) in tRNAs that read codons beginning with adenine. Is a component of the KEOPS complex that is probably involved in the transfer of the threonylcarbamoyl moiety of threonylcarbamoyl-AMP (TC-AMP) to the N6 group of A37. Kae1 likely plays a direct catalytic role in this reaction, but requires other protein(s) of the complex to fulfill this activity. The protein is tRNA N6-adenosine threonylcarbamoyltransferase of Thermococcus gammatolerans (strain DSM 15229 / JCM 11827 / EJ3).